The following is a 932-amino-acid chain: Glycine dehydrogenase (decarboxylating) (932 aa).

N6-(pyridoxal phosphate)lysine is present on Lys-685.

Belongs to the GcvP family. The glycine cleavage system is composed of four proteins: P, T, L and H. The cofactor is pyridoxal 5'-phosphate.

The enzyme catalyses N(6)-[(R)-lipoyl]-L-lysyl-[glycine-cleavage complex H protein] + glycine + H(+) = N(6)-[(R)-S(8)-aminomethyldihydrolipoyl]-L-lysyl-[glycine-cleavage complex H protein] + CO2. In terms of biological role, the glycine cleavage system catalyzes the degradation of glycine. The P protein binds the alpha-amino group of glycine through its pyridoxal phosphate cofactor; CO(2) is released and the remaining methylamine moiety is then transferred to the lipoamide cofactor of the H protein. The protein is Glycine dehydrogenase (decarboxylating) of Brucella abortus (strain S19).